Here is an 875-residue protein sequence, read N- to C-terminus: Phosphoenolpyruvate carboxylase (875 aa).

Residues histidine 137 and lysine 542 contribute to the active site.

Belongs to the PEPCase type 1 family. It depends on Mg(2+) as a cofactor.

It catalyses the reaction oxaloacetate + phosphate = phosphoenolpyruvate + hydrogencarbonate. Functionally, forms oxaloacetate, a four-carbon dicarboxylic acid source for the tricarboxylic acid cycle. This chain is Phosphoenolpyruvate carboxylase, found in Pseudomonas putida (strain ATCC 700007 / DSM 6899 / JCM 31910 / BCRC 17059 / LMG 24140 / F1).